The following is a 6077-amino-acid chain: Nonribosomal peptide synthetase nlsA (6077 aa).

The interval 417 to 618 is adenylation 1; that stretch reads VFAYAPLIHG…LGRKDSQIKL (202 aa). The 77-residue stretch at 751-827 folds into the Carrier 1 domain; sequence HSEVTVEDRL…DLVTRVQEIK (77 aa). The residue at position 788 (serine 788) is an O-(pantetheine 4'-phosphoryl)serine. 2 condensation regions span residues 842–1267 and 1309–1737; these read LSPI…GKRL and EDIY…KQRI. Adenylation stretches follow at residues 1757 to 2149 and 2755 to 3157; these read QEKM…YLGE and DRVI…QVKL. The 77-residue stretch at 3297–3373 folds into the Carrier 2 domain; it reads AVERAAESTL…DMAKCCDDTE (77 aa). Serine 3334 carries the O-(pantetheine 4'-phosphoryl)serine modification. Positions 3524–3779 are condensation 3; sequence DSRYRQCLYK…LLSVPRDSLM (256 aa). The segment at 3816 to 4213 is adenylation 4; it reads ENAIMHPQAT…LGRKDHQVKL (398 aa). The Carrier 3 domain maps to 4361 to 4437; it reads REGDATPAII…ELAVSCGTKP (77 aa). Serine 4398 carries the post-translational modification O-(pantetheine 4'-phosphoryl)serine. 2 condensation regions span residues 4451-4869 and 4916-5260; these read PLSP…RVLE and VEDI…EDKT. In terms of domain architecture, Carrier 4 spans 5334–5410; the sequence is RAPNDSEKQL…NMMALINDRK (77 aa). Serine 5371 carries the post-translational modification O-(pantetheine 4'-phosphoryl)serine. The tract at residues 5476–5885 is condensation 6; it reads DVLPVTDFQA…SLVANPNVAL (410 aa). Residues 5921–6004 form the Carrier 5 domain; sequence SEILVHSDLI…GHMAVLALNM (84 aa). Low complexity predominate over residues 6013 to 6027; sequence DSDAAPAPAYAPVDA. Residues 6013–6047 are disordered; that stretch reads DSDAAPAPAYAPVDARASRNVSTSRQQQEGLPLPA. The span at 6031 to 6041 shows a compositional bias: polar residues; it reads RNVSTSRQQQE.

Belongs to the NRP synthetase family.

The protein operates within secondary metabolite biosynthesis. Its function is as follows. Nonribosomal peptide synthetase involved in the synthesis of nidulanin A and derived compounds. Nidulanin A is a tetracyclopeptide with the sequence L-Phe-L-Kyn-L-Val-D-Val and an isoprene unit N-linked to the amino group of L-kynurenine. The NRPS nlsA is responsible of the synthesis of the cyclopeptide and the prenyltransferase nptA adds the isoprene unit on the L-kynurenine residue of nidulanin A. Further modifications lead to additional oxygenated related compounds. The chain is Nonribosomal peptide synthetase nlsA from Emericella nidulans (strain FGSC A4 / ATCC 38163 / CBS 112.46 / NRRL 194 / M139) (Aspergillus nidulans).